Reading from the N-terminus, the 570-residue chain is Probable metalloreductase AIM14 (570 aa).

A run of 7 helical transmembrane segments spans residues 21–41, 70–90, 101–118, 142–162, 177–197, 204–224, and 230–250; these read IKYG…LALL, AIHL…HYSL, LGRL…LTLR, IITV…AIDD, FVGF…IGPM, LFYI…PIHS, and FPFL…RIVF. Residues 101 to 219 enclose the Ferric oxidoreductase domain; the sequence is LGRLSYALIP…NLVNVAFILL (119 aa). Residues 250-388 enclose the FAD-binding FR-type domain; the sequence is FAKSLMILNK…GGSGISFALP (139 aa). A compositionally biased stretch (polar residues) spans 481–505; that stretch reads SNFNSENADSNDNTPETSHSPTKEN. The disordered stretch occupies residues 481 to 507; sequence SNFNSENADSNDNTPETSHSPTKENGS.

Belongs to the ferric reductase (FRE) family. AIM14 subfamily. Interacts with ribosomes.

The protein localises to the membrane. In terms of biological role, probable cell surface metalloreductase. May be involved in iron or copper homeostasis. This chain is Probable metalloreductase AIM14 (AIM14), found in Saccharomyces cerevisiae (strain RM11-1a) (Baker's yeast).